Here is a 653-residue protein sequence, read N- to C-terminus: DNA ligase (653 aa).

Residues 32–36 (NFEYD) and 80–81 (SL) each bind NAD(+). The active-site N6-AMP-lysine intermediate is Lys-104. Arg-125, Glu-159, and Lys-297 together coordinate NAD(+). Residues Cys-386, Cys-389, Cys-406, and Cys-411 each contribute to the Zn(2+) site. Residues 571–653 (GGSEKLKGLT…EEFIQLLNEA (83 aa)) form the BRCT domain.

Belongs to the NAD-dependent DNA ligase family. LigA subfamily. Requires Mg(2+) as cofactor. Mn(2+) serves as cofactor.

It carries out the reaction NAD(+) + (deoxyribonucleotide)n-3'-hydroxyl + 5'-phospho-(deoxyribonucleotide)m = (deoxyribonucleotide)n+m + AMP + beta-nicotinamide D-nucleotide.. Its function is as follows. DNA ligase that catalyzes the formation of phosphodiester linkages between 5'-phosphoryl and 3'-hydroxyl groups in double-stranded DNA using NAD as a coenzyme and as the energy source for the reaction. It is essential for DNA replication and repair of damaged DNA. The polypeptide is DNA ligase (Lachnoclostridium phytofermentans (strain ATCC 700394 / DSM 18823 / ISDg) (Clostridium phytofermentans)).